Reading from the N-terminus, the 481-residue chain is Guanine nucleotide exchange factor C9orf72 homolog (481 aa).

The region spanning 23 to 194 (SPLLAATFAY…ELLASMKSHS (172 aa)) is the uDENN C9ORF72-type domain. In terms of domain architecture, cDENN C9ORF72-type spans 200-343 (DIADTVLNDD…SELTAFWRAT (144 aa)). Residues 370-464 (VLHRDTLVKA…IKPGLHSFIF (95 aa)) form the dDENN C9ORF72-type domain. A required for the homodimerization of the C9orf72-SMCR8 complex region spans residues 461–481 (SFIFGRPFYTSVQERDVLMTF).

In terms of assembly, component of the C9orf72-SMCR8 complex, at least composed of C9orf72, SMCR8 and WDR41. The complex is formed of two protomers, each individually consisting of one molecule each of C9orf72, SMCR8 and WDR41. The protomers homodimerize via an interaction between C9orf72 (via C-terminus) and SMCR8 (via N-terminus). Within each protomer SMCR8 (via DENN domain) acts as a bridging protein between WDR41 (via C-terminus and N-terminus) and C9orf72 (via C-terminus). The C9orf72-SMCR8 complex associates with the ULK1/ATG1 kinase complex. Interacts with ULK1/ATG1 kinase complex members ULK1, ATG13 and RB1CC1. Interacts with SMCR8; the interaction is direct. Interacts with HNRNPA1, HNRNPA2B1 and UBQLN2. Interacts with small Rab GTPase RAB1A; the interaction mediates recruitment of RAB1A to the ULK1/ATG1 kinase complex. Also interacts with small Rab GTPase RAB7A. Interacts with cofilin. Interacts with GTP-binding proteins ARF1 and ARF6. Interacts with the DLG4/PSD-95. Interacts with CARM1 (via PH domain-like fold). Interacts with RAB39A and RAB39B (in GDP-bound forms); functions as GEF for RAB39A and RAB39B. In terms of tissue distribution, expressed in postnatal cerebellum and cortex (at protein level). Neuronal expression is detected in several regions of the adult brain and spinal cord. Prominent expression also observed in embryonic and early postnatal neurons including retinal ganglion cells, sensory neurons in the olfactory epithelium and in dorsal root ganglia, and spinal motor neurons. Expressed in the developing cerebral cortex, cerebellum, olfactory bulb, hippocampus and spinal cord in the embryo and in P0 cortical neurons and astrocytes. Also expressed in non-neuronal tissues such as kidney and tooth. In the spleen, highly expressed in myeloid cells compared to B cell and T cell populations where expression is much lower. In the brain, highly expressed in microglia. As to expression, expressed in the forebrain, including in the glomerular layer of the olfactory bulb (at protein level).

It is found in the nucleus. Its subcellular location is the cytoplasm. The protein localises to the P-body. It localises to the stress granule. The protein resides in the endosome. It is found in the lysosome. Its subcellular location is the cytoplasmic vesicle. The protein localises to the autophagosome. It localises to the autolysosome. The protein resides in the secreted. It is found in the cell projection. Its subcellular location is the axon. The protein localises to the growth cone. It localises to the perikaryon. The protein resides in the dendrite. It is found in the presynapse. Its subcellular location is the postsynapse. Its function is as follows. Acts as a guanine-nucleotide releasing factor (GEF) for Rab GTPases by promoting the conversion of inactive RAB-GDP to the active form RAB-GTP. Acts as a GEF for RAB39A which enables HOPS-mediated autophagosome-lysosome membrane tethering and fusion in mammalian autophagy. Component of the C9orf72-SMCR8 complex where both subunits display GEF activity and that regulates autophagy. As part of the C9orf72-SMCR8-WDR41 (CSW) complex, functions as GEF for RAB8A, and RAB39B, thereby promoting autophagosome maturation. As part of the C9orf72-SMCR8 complex, also functions as GTPase activating protein (GAP) for RAB8A and RAB11A in vitro. The C9orf72-SMCR8 complex also acts as a regulator of autophagy initiation by interacting with the ULK1/ATG1 kinase complex and modulating its protein kinase activity. Promotes initiation of autophagy by regulating the RAB1A-dependent trafficking of the ULK1/ATG1 kinase complex to the phagophore which leads to autophagosome formation. Acts as a regulator of mTORC1 signaling by promoting phosphorylation of mTORC1 substrates. Plays a role in endosomal trafficking. May be involved in regulating the maturation of phagosomes to lysosomes. Promotes the lysosomal localization and lysosome-mediated degradation of CARM1 which leads to inhibition of starvation-induced lipid metabolism. Regulates actin dynamics in motor neurons by inhibiting the GTP-binding activity of ARF6, leading to ARF6 inactivation. This reduces the activity of the LIMK1 and LIMK2 kinases which are responsible for phosphorylation and inactivation of CFL1/cofilin, leading to cofilin activation. Positively regulates axon extension and axon growth cone size in spinal motor neurons. Required for SMCR8 protein expression and localization at pre- and post-synaptic compartments in the forebrain, also regulates protein abundance of RAB3A and GRIA1/GLUR1 in post-synaptic compartments in the forebrain and hippocampus. Plays a role within the hematopoietic system in restricting inflammation and the development of autoimmunity. The protein is Guanine nucleotide exchange factor C9orf72 homolog of Mus musculus (Mouse).